Consider the following 70-residue polypeptide: Peptide BmKn1 (70 aa).

An N-terminal signal peptide occupies residues 1-23 (MKSQTFFLLFLVVLLLAISQSEA). At F36 the chain carries Phenylalanine amide. A propeptide spanning residues 40–70 (SMRDMDTMKYLYDPSLSAADLKTLQKLMENY) is cleaved from the precursor.

The protein belongs to the non-disulfide-bridged peptide (NDBP) superfamily. Short antimicrobial peptide (group 4) family. Expressed by the venom gland.

It is found in the secreted. The protein resides in the target cell membrane. Its function is as follows. Antibacterial peptide. The polypeptide is Peptide BmKn1 (Olivierus martensii (Manchurian scorpion)).